Here is a 38-residue protein sequence, read N- to C-terminus: Photosystem II reaction center protein L (38 aa).

Residues 17–37 (SLYWGLLLIFVLAVLFSSYFF) traverse the membrane as a helical segment.

Belongs to the PsbL family. PSII is composed of 1 copy each of membrane proteins PsbA, PsbB, PsbC, PsbD, PsbE, PsbF, PsbH, PsbI, PsbJ, PsbK, PsbL, PsbM, PsbT, PsbX, PsbY, PsbZ, Psb30/Ycf12, at least 3 peripheral proteins of the oxygen-evolving complex and a large number of cofactors. It forms dimeric complexes.

It localises to the plastid. The protein resides in the chloroplast thylakoid membrane. Its function is as follows. One of the components of the core complex of photosystem II (PSII). PSII is a light-driven water:plastoquinone oxidoreductase that uses light energy to abstract electrons from H(2)O, generating O(2) and a proton gradient subsequently used for ATP formation. It consists of a core antenna complex that captures photons, and an electron transfer chain that converts photonic excitation into a charge separation. This subunit is found at the monomer-monomer interface and is required for correct PSII assembly and/or dimerization. This is Photosystem II reaction center protein L from Thalassiosira pseudonana (Marine diatom).